Reading from the N-terminus, the 1013-residue chain is Hemoglobin-binding protein A (1013 aa).

Positions 1 to 24 (MTNFKFSLLACSIAFALNASTAYA) are cleaved as a signal peptide. Tandem repeats lie at residues 26-29 (QPTN), 30-33 (QPTN), 34-37 (QPTN), 38-41 (QPTN), 42-45 (QPTN), 46-49 (QPTN), 50-53 (QPTN), and 54-57 (QPTN). The interval 26 to 57 (QPTNQPTNQPTNQPTNQPTNQPTNQPTNQPTN) is 8 X 4 AA tandem repeats of Q-P-T-N. Low complexity predominate over residues 26–58 (QPTNQPTNQPTNQPTNQPTNQPTNQPTNQPTNQ). Residues 26 to 61 (QPTNQPTNQPTNQPTNQPTNQPTNQPTNQPTNQDSN) form a disordered region. The short motif at 67–74 (EQINVSGS) is the TonB box element. The region spanning 78 to 205 (SDSKTPPKIA…LGGSVIYKTK (128 aa)) is the TBDR plug domain. The 801-residue stretch at 213–1013 (NKDYYVSYKK…NYKMSVQFEF (801 aa)) folds into the TBDR beta-barrel domain. A TonB C-terminal box motif is present at residues 996 to 1013 (NRFYAPGRNYKMSVQFEF).

The protein belongs to the TonB-dependent receptor family. Hemoglobin/haptoglobin binding protein subfamily.

The protein resides in the cell outer membrane. In terms of biological role, acts as a receptor for hemoglobin of the human host and is required for heme uptake. The sequence is that of Hemoglobin-binding protein A (hgbA) from Haemophilus influenzae.